The primary structure comprises 265 residues: UDP-N-acetylenolpyruvoylglucosamine reductase (265 aa).

Positions 15–169 constitute an FAD-binding PCMH-type domain; it reads GVGGPAELWT…TRVRLKLKER (155 aa). The active site involves Arg-149. A disordered region spans residues 182–203; the sequence is DRARKGQPKRKSAGCAFKNPPG. Catalysis depends on Cys-196, which acts as the Proton donor.

This sequence belongs to the MurB family. FAD serves as cofactor.

The protein resides in the cytoplasm. The enzyme catalyses UDP-N-acetyl-alpha-D-muramate + NADP(+) = UDP-N-acetyl-3-O-(1-carboxyvinyl)-alpha-D-glucosamine + NADPH + H(+). Its pathway is cell wall biogenesis; peptidoglycan biosynthesis. Functionally, cell wall formation. This is UDP-N-acetylenolpyruvoylglucosamine reductase from Thermus thermophilus (strain ATCC 27634 / DSM 579 / HB8).